Here is a 704-residue protein sequence, read N- to C-terminus: Mannan-binding lectin serine protease 1 (704 aa).

An N-terminal signal peptide occupies residues 1-24 (MRFLSFRRLLLYHVLCLTLTEVSA). Positions 25–143 (HTVELNEMFG…TGFDAHYMAV (119 aa)) constitute a CUB 1 domain. Residues 25–189 (HTVELNEMFG…HTDNRTCRVE (165 aa)) form a homodimerization region. The interaction with MBL2 stretch occupies residues 25–189 (HTVELNEMFG…HTDNRTCRVE (165 aa)). Residues 25–283 (HTVELNEMFG…STQSHSIQIL (259 aa)) form an interaction with FCN2 region. The interaction with MBL1 stretch occupies residues 25–305 (HTVELNEMFG…RLSYRAAGNE (281 aa)). The N-linked (GlcNAc...) asparagine glycan is linked to asparagine 54. The Ca(2+) site is built by glutamate 73, aspartate 81, aspartate 126, serine 128, aspartate 144, valine 145, and glutamate 147. Cysteine 78 and cysteine 96 form a disulfide bridge. The EGF-like; calcium-binding domain occupies 144 to 187 (DVDECKEREDEELSCDHYCHNYIGGYYCSCRFGYILHTDNRTCR). 4 disulfides stabilise this stretch: cysteine 148–cysteine 162, cysteine 158–cysteine 171, cysteine 173–cysteine 186, and cysteine 190–cysteine 217. Residues asparagine 164, tyrosine 165, and glycine 168 each contribute to the Ca(2+) site. At asparagine 164 the chain carries (3R)-3-hydroxyasparagine. An N-linked (GlcNAc...) asparagine glycan is attached at asparagine 183. The CUB 2 domain occupies 190-302 (CSGNLFTQRT…RGWRLSYRAA (113 aa)). 4 residues coordinate Ca(2+): glutamate 240, aspartate 250, aspartate 287, and serine 289. Cysteine 247 and cysteine 265 form a disulfide bridge. 2 Sushi domains span residues 304–369 (NECP…TCKI) and 370–439 (VDCG…TCLP). Intrachain disulfides connect cysteine 306–cysteine 354, cysteine 334–cysteine 367, cysteine 372–cysteine 419, cysteine 402–cysteine 437, cysteine 441–cysteine 577, and cysteine 480–cysteine 496. 2 N-linked (GlcNAc...) asparagine glycosylation sites follow: asparagine 390 and asparagine 412. Positions 454 to 701 (IFNGRPAQKG…NKDWIQRVTG (248 aa)) constitute a Peptidase S1 domain. The active-site Charge relay system is the histidine 495. Residue leucine 538 is glycosylated (N-linked (GlcNAc...) asparagine). Catalysis depends on aspartate 557, which acts as the Charge relay system. N-linked (GlcNAc...) asparagine glycosylation occurs at glutamate 604. Cystine bridges form between cysteine 619/cysteine 636 and cysteine 647/cysteine 677. Serine 651 acts as the Charge relay system in catalysis.

It belongs to the peptidase S1 family. Homodimer. Interacts with the oligomeric lectins MBL2, FCN2 and FCN3; triggers the lectin pathway of complement through activation of C3. Interacts with SERPING1. Interacts with COLEC11; probably triggers the lectin pathway of complement. In terms of processing, the iron and 2-oxoglutarate dependent 3-hydroxylation of aspartate and asparagine is (R) stereospecific within EGF domains. Post-translationally, N-glycosylated. Some N-linked glycan are of the complex-type. Autoproteolytic processing of the proenzyme produces the active enzyme composed on the heavy and the light chain held together by a disulfide bond. Isoform 1 but not isoform 2 is activated through autoproteolytic processing. As to expression, protein of the plasma which is primarily expressed by liver.

The protein resides in the secreted. Inhibited by SERPING1 and A2M. Functions in the lectin pathway of complement, which performs a key role in innate immunity by recognizing pathogens through patterns of sugar moieties and neutralizing them. The lectin pathway is triggered upon binding of mannan-binding lectin (MBL) and ficolins to sugar moieties which leads to activation of the associated proteases MASP1 and MASP2. Functions as an endopeptidase and may activate MASP2 or C2 or directly activate C3 the key component of complement reaction. Isoform 2 may have an inhibitory effect on the activation of the lectin pathway of complement or may cleave IGFBP5. Also plays a role in development. In Rattus norvegicus (Rat), this protein is Mannan-binding lectin serine protease 1 (Masp1).